Reading from the N-terminus, the 268-residue chain is D-alanyl-D-alanine carboxypeptidase (268 aa).

The helical transmembrane segment at 25 to 47 (AFLWAFIISFTVCTLFLGWRLVS) threads the bilayer. Substrate contacts are provided by residues Gln151, 179 to 181 (WVA), and Ser186. Zn(2+)-binding residues include His188 and Asp195. The Proton donor/acceptor role is filled by Glu238. Zn(2+) is bound at residue His241.

Belongs to the peptidase M15B family. As to quaternary structure, monomer. The cofactor is Zn(2+).

It is found in the cell membrane. Carboxypeptidase activity is insensitive to beta-lactams since it is not affected by penicillin G or ampicillin and is inhibited only by very high concentrations of cefalotin and cefoxitin. In terms of biological role, carboxypeptidase that cleaves the C-terminal D-alanine residue from the peptidoglycan-derived pentapeptide L-Ala-gamma-D-Glu-L-Lys-D-Ala-D-Ala in vitro. Therefore, should contribute in vivo to the hydrolysis of the D-alanyl-D-alanine-containing peptidoglycan precursors. May increase the level of glycopeptide antibiotics resistance by decreasing the availability of D-Ala-D-Ala termini from the cell surface, which constitute the antibiotic target residues. The chain is D-alanyl-D-alanine carboxypeptidase from Enterococcus faecalis (strain ATCC 700802 / V583).